The primary structure comprises 701 residues: Dynein axonemal intermediate chain 1 (701 aa).

Disordered stretches follow at residues 1–45 (MPSK…VRPP) and 119–165 (EMVA…DIPA). Phosphoserine occurs at positions 124 and 127. Over residues 136 to 155 (ENLEEEEEPKEGEGEAEAEA) the composition is skewed to acidic residues. 5 WD repeats span residues 382 to 422 (SSES…SQPC), 431 to 474 (KHTD…LVHI), 539 to 579 (AHNM…PMFI), 581 to 621 (DLNS…YEAI), and 629 to 668 (KKKNKITHVQFNPIHPIIIVGDDRGHIICLKLSPNLRKMP).

Belongs to the dynein intermediate chain family. Consists of at least two heavy chains and a number of intermediate and light chains. Interacts with BICD2. Interacts with CFAP45 and CFAP52. Interacts with CFAP53.

The protein localises to the cytoplasm. The protein resides in the cytoskeleton. It localises to the cilium axoneme. Part of the dynein complex of respiratory cilia. The sequence is that of Dynein axonemal intermediate chain 1 (Dnai1) from Mus musculus (Mouse).